A 549-amino-acid chain; its full sequence is Rhodopsin kinase grk7a (549 aa).

Phosphoserine is present on Ser-33. In terms of domain architecture, RGS spans 53–171; it reads FESLCEKQPI…QASPFFDKFL (119 aa). Positions 186–449 constitute a Protein kinase domain; that stretch reads FYEFRTLGKG…NDDPRKHEWF (264 aa). ATP-binding positions include 192 to 200 and Lys-215; that span reads LGKGGFGEV. Residue Asp-311 is the Proton acceptor of the active site. The AGC-kinase C-terminal domain occupies 450–515; the sequence is KSINFARLEA…GAVSIAWQQE (66 aa). The tract at residues 522 to 549 is disordered; sequence FDELSDPNRKESSGGSDDDKKSGTCTLL. The segment covering 527 to 543 has biased composition (basic and acidic residues); it reads DPNRKESSGGSDDDKKS. Cysteine methyl ester is present on Cys-546. Cys-546 carries the S-geranylgeranyl cysteine lipid modification. The propeptide at 547–549 is removed in mature form; it reads TLL.

This sequence belongs to the protein kinase superfamily. AGC Ser/Thr protein kinase family. GPRK subfamily. In terms of processing, phosphorylation at Ser-33 is regulated by light and activated by cAMP.

The protein localises to the membrane. The enzyme catalyses L-threonyl-[rhodopsin] + ATP = O-phospho-L-threonyl-[rhodopsin] + ADP + H(+). It carries out the reaction L-seryl-[rhodopsin] + ATP = O-phospho-L-seryl-[rhodopsin] + ADP + H(+). In terms of biological role, retina-specific kinase involved in the shutoff of the photoresponse and adaptation to changing light conditions via cone opsin phosphorylation, including rhodopsin (RHO). This Danio rerio (Zebrafish) protein is Rhodopsin kinase grk7a (grk7a).